Reading from the N-terminus, the 884-residue chain is Blastomere cadherin (884 aa).

Positions 1-26 (MGGTDKFRYPSVWLCGLLCLLQVVPS) are cleaved as a signal peptide. A propeptide spanning residues 27–157 (INVDVSGCQP…KHTGLKRKKR (131 aa)) is cleaved from the precursor. 5 Cadherin domains span residues 158-265 (DWVI…RPKF), 266-378 (TQPV…APIF), 379-489 (DPKT…APVF), 490-595 (VPVV…DNGP), and 596-706 (VPSP…GFDL). Over 158-706 (DWVIPPIKVS…QEKLVAGFDL (549 aa)) the chain is Extracellular. N-linked (GlcNAc...) asparagine glycosylation is found at asparagine 427, asparagine 560, and asparagine 683. A helical transmembrane segment spans residues 707 to 730 (PIILVILGSILALLILSLLLLLFL). Topologically, residues 731-884 (KRKKVVKEPL…YGGDDDDDEE (154 aa)) are cytoplasmic.

Expressed in pituitary gland, lung and kidney.

The protein resides in the cell membrane. Functionally, cadherins are calcium-dependent cell adhesion proteins. They preferentially interact with themselves in a homophilic manner in connecting cells; cadherins may thus contribute to the sorting of heterogeneous cell types. The sequence is that of Blastomere cadherin from Xenopus laevis (African clawed frog).